The following is a 261-amino-acid chain: Zinc finger protein 664 (261 aa).

C2H2-type zinc fingers lie at residues 3–25 (YKCP…QKIH), 31–53 (HKCD…WRDH), 59–81 (YKCD…KKIH), 87–109 (YKCY…MRVH), 115–137 (YVCS…QRVH), 143–165 (FKCE…QRVH), 171–193 (YKCY…QRVH), 199–221 (YRCC…QRVH), and 227–249 (FKCD…QRVH). K257 participates in a covalent cross-link: Glycyl lysine isopeptide (Lys-Gly) (interchain with G-Cter in SUMO2).

The protein belongs to the krueppel C2H2-type zinc-finger protein family.

The protein localises to the nucleus. Its function is as follows. May be involved in transcriptional regulation. This is Zinc finger protein 664 (Znf664) from Mus musculus (Mouse).